A 345-amino-acid chain; its full sequence is Isocitrate/homoisocitrate dehydrogenase (345 aa).

Position 69 to 71 (69 to 71 (TTT)) interacts with NADH. Positions 86, 96, 111, 118, 163, and 165 each coordinate (2R,3S)-homoisocitrate. An NADH-binding site is contributed by Asn-165. Positions 194, 218, and 222 each coordinate Mg(2+). NADH-binding positions include 251–255 (GSAPD) and Asn-263.

This sequence belongs to the isocitrate and isopropylmalate dehydrogenases family. Mn(2+) serves as cofactor. It depends on Mg(2+) as a cofactor.

It carries out the reaction D-threo-isocitrate + NAD(+) = 2-oxoglutarate + CO2 + NADH. The enzyme catalyses (2R,3S)-homoisocitrate + NAD(+) = 2-oxoadipate + CO2 + NADH. The protein operates within amino-acid biosynthesis; L-lysine biosynthesis via AAA pathway; L-alpha-aminoadipate from 2-oxoglutarate: step 4/5. In terms of biological role, catalyzes the NAD(+)-dependent oxidative decarboxylation of homoisocitrate to 2-oxoadipate (alpha-ketoadipate), and of isocitrate to 2-oxoglutarate, at near equal efficiency. May thus play a dual role in glutamate and lysine biosynthesis in vivo. Preferentially uses NAD over NADP. This chain is Isocitrate/homoisocitrate dehydrogenase, found in Pyrococcus horikoshii (strain ATCC 700860 / DSM 12428 / JCM 9974 / NBRC 100139 / OT-3).